We begin with the raw amino-acid sequence, 373 residues long: CXADR-like membrane protein (373 aa).

Residues 1–18 form the signal peptide; the sequence is MSLLLLLLLVSYYVGTLG. Ig-like C2-type domains follow at residues 19-127 and 135-224; these read THTE…VILK and PKCE…VRVT. At 19–235 the chain is on the extracellular side; it reads THTEIKRVAE…QYVQSIGMVA (217 aa). 2 cysteine pairs are disulfide-bonded: Cys-35/Cys-111 and Cys-153/Cys-208. 2 N-linked (GlcNAc...) asparagine glycosylation sites follow: Asn-74 and Asn-197. The helical transmembrane segment at 236–256 threads the bilayer; the sequence is GAVTGIVAGALLIFLLVWLLI. Over 257–373 the chain is Cytoplasmic; it reads RRKDKERYEE…PSQSRAFQTV (117 aa). Positions 264–281 are enriched in basic and acidic residues; the sequence is YEEEERPNEIREDAEAPK. Residues 264–373 form a disordered region; the sequence is YEEEERPNEI…PSQSRAFQTV (110 aa). Residues 288–314 are compositionally biased toward low complexity; that stretch reads SSSSSGSRSSRSGSSSTRSTANSASRS. Residues 355–373 show a composition bias toward polar residues; sequence KAETTPSMIPSQSRAFQTV.

In terms of tissue distribution, predominantly expressed in epithelial cells within different tissues and in the white adipose tissue. Expressed at high levels in small intestine and placenta, at intermediate levels in the heart, skeletal muscle, colon, spleen, kidney and lung and at low levels in the liver and peripheral blood leukocytes. Highly abundant in the intestine during embryo and fetal development (at protein level).

The protein localises to the cell junction. Its subcellular location is the tight junction. It is found in the cell membrane. In terms of biological role, may be involved in the cell-cell adhesion. May play a role in adipocyte differentiation and development of obesity. Is required for normal small intestine development. This is CXADR-like membrane protein (CLMP) from Homo sapiens (Human).